The primary structure comprises 432 residues: Sensor histidine kinase YrkQ (432 aa).

Residues 1–12 lie on the Cytoplasmic side of the membrane; the sequence is MAHLKFTLTKKL. Residues 13 to 33 form a helical membrane-spanning segment; sequence ALLIMVAAIVSGVIFLTLQKI. The Extracellular segment spans residues 34 to 145; that stretch reads TDDLIEGYLS…GFYSSRYYDL (112 aa). Residues 146–166 traverse the membrane as a helical segment; sequence AFALDLLGATLIFLIIVLFGI. One can recognise an HAMP domain in the interval 167-219; that stretch reads RQSLRYLKTIHQEIHILEGGELDYEMTIKGHDELAMIAKSIEDLRKAFLDKLK. Residues 167-432 lie on the Cytoplasmic side of the membrane; sequence RQSLRYLKTI…IVLRFWNTKM (266 aa). The Histidine kinase domain occupies 234–432; it reads EMSHDMRTPL…IVLRFWNTKM (199 aa). At His-237 the chain carries Phosphohistidine; by autocatalysis.

It is found in the cell membrane. It catalyses the reaction ATP + protein L-histidine = ADP + protein N-phospho-L-histidine.. Functionally, member of the two-component regulatory system YrkQ/YrkP. Probably activates YrkP by phosphorylation. The sequence is that of Sensor histidine kinase YrkQ (yrkQ) from Bacillus subtilis (strain 168).